Consider the following 657-residue polypeptide: Glycogen debranching enzyme (657 aa).

Asp336 functions as the Nucleophile in the catalytic mechanism. Glu371 functions as the Proton donor in the catalytic mechanism. The tract at residues 460–479 (ANGEENRDGTNNNYSNNHGK) is disordered.

The protein belongs to the glycosyl hydrolase 13 family.

It catalyses the reaction Hydrolysis of (1-&gt;6)-alpha-D-glucosidic linkages to branches with degrees of polymerization of three or four glucose residues in limit dextrin.. It participates in glycan degradation; glycogen degradation. Its function is as follows. Removes maltotriose and maltotetraose chains that are attached by 1,6-alpha-linkage to the limit dextrin main chain, generating a debranched limit dextrin. The protein is Glycogen debranching enzyme of Escherichia coli O6:K15:H31 (strain 536 / UPEC).